The primary structure comprises 261 residues: 2-phytyl-1,4-beta-naphthoquinone methyltransferase, chloroplastic (261 aa).

The N-terminal 30 residues, 1–30, are a transit peptide targeting the chloroplast; it reads MAALLGIVSPVTFTGKHPVNSRSRRRTVVK.

The protein belongs to the class I-like SAM-binding methyltransferase superfamily. MenG/UbiE family.

It is found in the plastid. The protein localises to the chloroplast. It carries out the reaction demethylphylloquinol + S-adenosyl-L-methionine = phylloquinol + S-adenosyl-L-homocysteine + H(+). Functionally, involved in the biosynthesis of phylloquinone (vitamin K1). Methyltransferase required for the conversion of 2-phytyl-1,4-beta-naphthoquinol to phylloquinol. The polypeptide is 2-phytyl-1,4-beta-naphthoquinone methyltransferase, chloroplastic (Arabidopsis thaliana (Mouse-ear cress)).